Here is a 1034-residue protein sequence, read N- to C-terminus: Sodium bicarbonate cotransporter 3 (1034 aa).

Disordered regions lie at residues 1–31 and 53–99; these read MEADGAGEQMRPLLTRGPDEEAVVDLGKTSS and HVPF…SQRV. At 1-476 the chain is on the extracellular side; sequence MEADGAGEQM…DFKDALSLQC (476 aa). Ser-57, Ser-60, Ser-89, and Ser-155 each carry phosphoserine. Basic residues predominate over residues 60–77; sequence SRRRHKHRGHKHHHRRRK. Positions 78–90 are enriched in basic and acidic residues; the sequence is DKDSDKEDGRESP. N-linked (GlcNAc...) asparagine glycosylation is present at Asn-176. Phosphoserine occurs at positions 238, 250, 260, 263, 268, and 271. Over residues 250–260 the composition is skewed to polar residues; it reads SAPGNLDNSKS. The interval 250–276 is disordered; sequence SAPGNLDNSKSGEMKGNGSGGSRENST. Asn-274 carries N-linked (GlcNAc...) asparagine glycosylation. A phosphoserine mark is found at Ser-275 and Ser-424. The chain crosses the membrane as a helical span at residues 477–497; it reads LASILFLYCACMSPVITFGGL. Residues 498–505 lie on the Cytoplasmic side of the membrane; the sequence is LGEATEGR. A helical membrane pass occupies residues 506 to 526; sequence ISAIESLFGASLTGIAYSLFA. Residues 527 to 563 lie on the Extracellular side of the membrane; it reads GQPLTILGSTGPVLVFEKILFKFCRDYHLSYLSLRTS. Residues 564 to 584 traverse the membrane as a helical segment; sequence IGLWTSFLCIVLVATDASSLV. Residues 585 to 593 are Cytoplasmic-facing; that stretch reads CYITRFTEE. A helical membrane pass occupies residues 594–614; it reads AFAALICIIFIYEALEKLFHL. At 615 to 685 the chain is on the extracellular side; sequence GEIYAFNMHN…MFVGSACGPH (71 aa). A disulfide bond links Cys-634 and Cys-636. N-linked (GlcNAc...) asparagine glycans are attached at residues Asn-644, Asn-654, and Asn-664. A disulfide bridge links Cys-670 with Cys-682. A helical transmembrane segment spans residues 686 to 706; it reads GPYVPDVLFWCVVLFFTTFFL. Topologically, residues 707 to 729 are cytoplasmic; it reads SSFLKQFKTKGYFPTKVRSTISD. Residues 730–750 form a helical membrane-spanning segment; it reads FAVFLTIVIMVAIDYLVGIPS. Residues 751 to 776 are Extracellular-facing; it reads PKLHVPEKFEPTDPSRGWIISPLGDN. The chain crosses the membrane as a helical span at residues 777 to 797; that stretch reads PWWTLLIAAVPALLCTILIFM. At 798–812 the chain is on the cytoplasmic side; the sequence is DQQITAVIINRKEHK. The helical transmembrane segment at 813–833 threads the bilayer; that stretch reads LKFIPMPVLYGVFLYMGVSSL. The tract at residues 815-915 is essential for cell membrane localization and transport activity; it reads FIPMPVLYGV…MDLCFTKREL (101 aa). The Extracellular segment spans residues 834–876; sequence KGIQFFDRIKLFGMPAKHQPDLIYLRYVPLWKVHVFTVVQLTC. A helical membrane pass occupies residues 877-897; sequence LVLLWVIKASAAAVVFPMMVL. At 898–1034 the chain is on the cytoplasmic side; that stretch reads ALVFVRKLMD…KKYMDAETSL (137 aa). Residues 918-920 are CA2-binding; the sequence is LDD. The interval 926–946 is disordered; the sequence is KKKKEDDKKKKEKEEAERMLQ. The residue at position 951 (Thr-951) is a Phosphothreonine. 2 positions are modified to phosphoserine: Ser-960 and Ser-1033. The PDZ-binding signature appears at 1031–1034; the sequence is ETSL.

Belongs to the anion exchanger (TC 2.A.31) family. As to quaternary structure, forms a complex with ATP6V1B1 and NHERF1/EBP50. Interacts in a pH dependent-manner with CA2/carbonic anhydrase 2. Interacts with CFTR through NHERF1/EBP50. Interacts with USH1C. In terms of tissue distribution, expressed in the spiral ligament throughout the cochlea and in photoreceptors of the outer plexiform layer of the retina (at protein level).

It localises to the basolateral cell membrane. Its subcellular location is the apical cell membrane. The protein localises to the cell projection. The protein resides in the stereocilium. It is found in the cell membrane. It carries out the reaction hydrogencarbonate(in) + Na(+)(in) = hydrogencarbonate(out) + Na(+)(out). With respect to regulation, activity is inhibited by 4,4'-di-isothiocyanatostilbene-2,2'-disulfonic acid (DIDS - an inhibitor of several anion channels and transporters). Electroneutral sodium- and bicarbonate-dependent cotransporter with a Na(+):HCO3(-) 1:1 stoichiometry. Mediates the sodium-dependent bicarbonate transport important for pH recovery after acid load as well as for regulation of steady-state pH in the duodenum and vascular smooth muscle cells. Plays a key role in macrophage acidification, mediating bicarbonate import into the cytoplasm which is crucial for net acid extrusion and maintenance of cytoplasmic pH during phagocytosis. Provides cellular bicarbonate for de novo purine and pyrimidine synthesis and is a key mediator of de novo nucleotide synthesis downstream of mTORC1 signaling in proliferating cells. May be involved in maintaining locomotor activity, exploratory behavior, and hearing. This chain is Sodium bicarbonate cotransporter 3 (Slc4a7), found in Mus musculus (Mouse).